A 259-amino-acid polypeptide reads, in one-letter code: Protein YIF1B (259 aa).

Residue M1 is modified to N-acetylmethionine. The interval 1–61 (MHATGLAAPA…QPSPGSLGYP (61 aa)) is disordered. The Cytoplasmic portion of the chain corresponds to 9–153 (PAGTPRLRKW…APRFDINAPD (145 aa)). T12 carries the post-translational modification Phosphothreonine. Positions 14 to 24 (RLRKWPSKRRV) are enriched in basic residues. A Phosphoserine modification is found at S64. A helical membrane pass occupies residues 154–174 (LYIPAMAFITYILVAGLALGT). Topologically, residues 175 to 186 (QDRMIGGVLTGL) are extracellular. Residues 187–207 (LFGKIGYYLVLAWCCVSIFVF) traverse the membrane as a helical segment. Residues 208 to 237 (MIRTLRLKILAQAAAEGVPVRGARNQLRMY) are Cytoplasmic-facing. A helical membrane pass occupies residues 238 to 258 (LTMAVAAAQPVLMYWLTFHLV). A topological domain (extracellular) is located at residue R259.

Belongs to the YIF1 family. Interacts with HTR1A (via C-terminus). Interacts with ABCB9 (via TMD0); this interaction allows (but is not essential) the ER-to-Golgi trafficking and strongly depends on a salt bridge within TMD0. Highly expressed in brain. Expressed in heart, kidney, and lung and lower levels in spleen, muscle, and intestine (at protein level). Expressed in serotoninergic neurons (at protein level).

It is found in the endoplasmic reticulum membrane. It localises to the golgi apparatus membrane. The protein localises to the endoplasmic reticulum-Golgi intermediate compartment membrane. In terms of biological role, functions in endoplasmic reticulum to Golgi vesicle-mediated transport and regulates the proper organization of the endoplasmic reticulum and the Golgi. Plays a key role in targeting to neuronal dendrites receptors such as HTR1A. Plays also a role in primary cilium and sperm flagellum assembly probably through protein transport to these compartments. The protein is Protein YIF1B of Rattus norvegicus (Rat).